Consider the following 144-residue polypeptide: Elicitor-responsive protein 3 (144 aa).

The C2 domain maps to 1–103 (MVQGTLEVLL…YTEGSIPPTV (103 aa)). 5 residues coordinate Ca(2+): Asp20, Asp26, Asp73, Asp75, and Asp81. Positions 123–144 (TPEDDRDRGLSEEDIGGWKQSS) are disordered.

Ca(2+) serves as cofactor.

In Oryza sativa subsp. indica (Rice), this protein is Elicitor-responsive protein 3 (ERG3).